The following is an 801-amino-acid chain: Elongation factor G, mitochondrial (801 aa).

The transit peptide at 1 to 24 directs the protein to the mitochondrion; sequence MRCPSLARLPHRAISGLTRLPVRL. The region spanning 99–386 is the tr-type G domain; that stretch reads SRIRNIGIAA…GVIDYLPNPS (288 aa). GTP is bound by residues 108–115, 184–188, and 238–241; these read AHIDSGKT, DTPGH, and NKMD.

The protein belongs to the TRAFAC class translation factor GTPase superfamily. Classic translation factor GTPase family. EF-G/EF-2 subfamily.

It is found in the mitochondrion. Its pathway is protein biosynthesis; polypeptide chain elongation. Functionally, mitochondrial GTPase that catalyzes the GTP-dependent ribosomal translocation step during translation elongation. During this step, the ribosome changes from the pre-translocational (PRE) to the post-translocational (POST) state as the newly formed A-site-bound peptidyl-tRNA and P-site-bound deacylated tRNA move to the P and E sites, respectively. Catalyzes the coordinated movement of the two tRNA molecules, the mRNA and conformational changes in the ribosome. This Aspergillus clavatus (strain ATCC 1007 / CBS 513.65 / DSM 816 / NCTC 3887 / NRRL 1 / QM 1276 / 107) protein is Elongation factor G, mitochondrial (mef1).